Consider the following 206-residue polypeptide: Holliday junction branch migration complex subunit RuvA (206 aa).

The segment at 1-63 is domain I; the sequence is MISSLRGDVI…DDAHTLYAFS (63 aa). The tract at residues 64–142 is domain II; the sequence is TSEQRETFGI…ALEATSGQAT (79 aa). The tract at residues 143–150 is flexible linker; the sequence is IGDIAATG. Positions 151-206 are domain III; sequence NDTALQSQVVEALVGLGFTEAKAATAVKKILEEQNGTTDPSSVLREALQRLSGQKR.

Belongs to the RuvA family. As to quaternary structure, homotetramer. Forms an RuvA(8)-RuvB(12)-Holliday junction (HJ) complex. HJ DNA is sandwiched between 2 RuvA tetramers; dsDNA enters through RuvA and exits via RuvB. An RuvB hexamer assembles on each DNA strand where it exits the tetramer. Each RuvB hexamer is contacted by two RuvA subunits (via domain III) on 2 adjacent RuvB subunits; this complex drives branch migration. In the full resolvosome a probable DNA-RuvA(4)-RuvB(12)-RuvC(2) complex forms which resolves the HJ.

It is found in the cytoplasm. Its function is as follows. The RuvA-RuvB-RuvC complex processes Holliday junction (HJ) DNA during genetic recombination and DNA repair, while the RuvA-RuvB complex plays an important role in the rescue of blocked DNA replication forks via replication fork reversal (RFR). RuvA specifically binds to HJ cruciform DNA, conferring on it an open structure. The RuvB hexamer acts as an ATP-dependent pump, pulling dsDNA into and through the RuvAB complex. HJ branch migration allows RuvC to scan DNA until it finds its consensus sequence, where it cleaves and resolves the cruciform DNA. This chain is Holliday junction branch migration complex subunit RuvA, found in Corynebacterium urealyticum (strain ATCC 43042 / DSM 7109).